Consider the following 401-residue polypeptide: 8-amino-7-oxononanoate synthase (401 aa).

Arg24 is a substrate binding site. 111 to 112 serves as a coordination point for pyridoxal 5'-phosphate; sequence GF. His137 lines the substrate pocket. Residues Ser183, His211, and Thr240 each coordinate pyridoxal 5'-phosphate. N6-(pyridoxal phosphate)lysine is present on Lys243. Thr357 contributes to the substrate binding site.

It belongs to the class-II pyridoxal-phosphate-dependent aminotransferase family. BioF subfamily. Homodimer. The cofactor is pyridoxal 5'-phosphate.

It catalyses the reaction 6-carboxyhexanoyl-[ACP] + L-alanine + H(+) = (8S)-8-amino-7-oxononanoate + holo-[ACP] + CO2. The protein operates within cofactor biosynthesis; biotin biosynthesis. In terms of biological role, catalyzes the decarboxylative condensation of pimeloyl-[acyl-carrier protein] and L-alanine to produce 8-amino-7-oxononanoate (AON), [acyl-carrier protein], and carbon dioxide. This chain is 8-amino-7-oxononanoate synthase, found in Xanthomonas euvesicatoria pv. vesicatoria (strain 85-10) (Xanthomonas campestris pv. vesicatoria).